We begin with the raw amino-acid sequence, 543 residues long: Membrane protein insertase YidC (543 aa).

A helical membrane pass occupies residues 7–27 (FLLIGLAMVSFLLWQQWQVDY). The segment at 30–61 (QPAQPVESQQTTGSDAPNSNGDVPIATPTNKS) is disordered. Residues 35–61 (VESQQTTGSDAPNSNGDVPIATPTNKS) are compositionally biased toward polar residues. Transmembrane regions (helical) follow at residues 341–361 (FAFLQFIHSLIGNWGFSIILI), 421–441 (GGCFPLLLQMPIFLALYWVLL), 451–471 (FIFWITDLSVKDPYFVLPILT), and 499–519 (PVAMSLFFFIFPAGLVLYWLI).

The protein belongs to the OXA1/ALB3/YidC family. Type 1 subfamily. In terms of assembly, interacts with the Sec translocase complex via SecD. Specifically interacts with transmembrane segments of nascent integral membrane proteins during membrane integration.

It localises to the cell inner membrane. Its function is as follows. Required for the insertion and/or proper folding and/or complex formation of integral membrane proteins into the membrane. Involved in integration of membrane proteins that insert both dependently and independently of the Sec translocase complex, as well as at least some lipoproteins. Aids folding of multispanning membrane proteins. This chain is Membrane protein insertase YidC, found in Pseudoalteromonas atlantica (strain T6c / ATCC BAA-1087).